The chain runs to 695 residues: G-patch and R3H domain-containing protein C30B4.02c (695 aa).

Disordered regions lie at residues 168–200, 213–242, 257–317, 332–351, 388–448, and 475–517; these read SDKE…NDDS, DIAN…EFDI, FADL…FDEG, GNTD…DEDE, DSED…VAAR, and DKSK…DSDN. A compositionally biased stretch (basic and acidic residues) spans 182–198; the sequence is CYKEQESEKELYSKDND. Acidic residues-rich tracts occupy residues 262 to 286, 307 to 317, and 337 to 351; these read VLEE…EEEE, EDSESLEFDEG, and LAED…DEDE. Residues 421-434 show a composition bias toward basic residues; that stretch reads KKDRKLPKKMRKAQ. The region spanning 525 to 587 is the R3H domain; that stretch reads KIFINDVYQR…KRYTMLSKTH (63 aa). Residues 652-695 form the G-patch domain; the sequence is KENPGRRLLEKLGWYAGKGLGHPENEGSKDSLRAIVKVSRSGLG.

The protein resides in the cytoplasm. The sequence is that of G-patch and R3H domain-containing protein C30B4.02c from Schizosaccharomyces pombe (strain 972 / ATCC 24843) (Fission yeast).